We begin with the raw amino-acid sequence, 413 residues long: MASKKFAVKCGNFAVLVDLHVLPQGSNRDSSWFSEQKKEEVCLLLKETIDSRVKEYVGIYKQRKPSSAEFTRSSPLSLKGYGFQITAYFLKRGIHLHCIQNSQNTELRVFPERFVVCVSQLAFGHDIWANQNEKSTKKALHGVSDYFPECAESSPSPGTKLKRNALKEIVRRTKSKGTDVSKPQPSGDLVGRSSDSVITVVPWRRDASAILLSESVGQAQDDIRAAKSHQELPVQKLENVSQTQPGDTRSQQQLHPGEWLKTGLLSRSPAYNYESASPGPKQSLRAAKTQQKHRNCGSVEDCDHRRRVSLGNEGLVPEDADRERSTAVRVLPALELSDPGLLLKQDLAKAKAKEELHALENLSSRHLVTNNPGQAQQSDSAAITEQLATDQGGPSKKRKKLQSYNRGCSGKKN.

Glycyl lysine isopeptide (Lys-Gly) (interchain with G-Cter in SUMO2) cross-links involve residues Lys61, Lys79, Lys167, Lys176, and Lys236. Disordered regions lie at residues 172–193 (RTKS…VGRS) and 228–300 (SHQE…GSVE). Residues 238–254 (ENVSQTQPGDTRSQQQL) are compositionally biased toward polar residues. Glycyl lysine isopeptide (Lys-Gly) (interchain with G-Cter in SUMO2) cross-links involve residues Lys288, Lys344, and Lys353. Residues 363–413 (SSRHLVTNNPGQAQQSDSAAITEQLATDQGGPSKKRKKLQSYNRGCSGKKN) are disordered. Over residues 364–389 (SRHLVTNNPGQAQQSDSAAITEQLAT) the composition is skewed to polar residues. At Thr389 the chain carries Phosphothreonine. A Glycyl lysine isopeptide (Lys-Gly) (interchain with G-Cter in SUMO2) cross-link involves residue Lys396.

Belongs to the SLX4IP family. As to quaternary structure, interacts with SLX4/BTBD12; subunit of different structure-specific endonucleases.

The chain is Protein SLX4IP (Slx4ip) from Mus musculus (Mouse).